The chain runs to 426 residues: Histidine--tRNA ligase (426 aa).

The protein belongs to the class-II aminoacyl-tRNA synthetase family. As to quaternary structure, homodimer.

The protein resides in the cytoplasm. The enzyme catalyses tRNA(His) + L-histidine + ATP = L-histidyl-tRNA(His) + AMP + diphosphate + H(+). This Picosynechococcus sp. (strain ATCC 27264 / PCC 7002 / PR-6) (Agmenellum quadruplicatum) protein is Histidine--tRNA ligase.